Reading from the N-terminus, the 550-residue chain is Methionine--tRNA ligase (550 aa).

A 'HIGH' region motif is present at residues 13 to 23 (PYANGPLHFGH). Zn(2+) contacts are provided by Cys145, Cys148, Cys158, and Cys161. Residues 331–335 (QFSKS) carry the 'KMSKS' region motif. Lys334 contributes to the ATP binding site.

Belongs to the class-I aminoacyl-tRNA synthetase family. MetG type 1 subfamily. Monomer. It depends on Zn(2+) as a cofactor.

It is found in the cytoplasm. The enzyme catalyses tRNA(Met) + L-methionine + ATP = L-methionyl-tRNA(Met) + AMP + diphosphate. Its function is as follows. Is required not only for elongation of protein synthesis but also for the initiation of all mRNA translation through initiator tRNA(fMet) aminoacylation. In Chlamydia trachomatis serovar D (strain ATCC VR-885 / DSM 19411 / UW-3/Cx), this protein is Methionine--tRNA ligase (metG).